A 398-amino-acid polypeptide reads, in one-letter code: DJ-1 protein homolog E (398 aa).

PfpI endopeptidase domains follow at residues 7 to 199 and 210 to 393; these read KSAL…ESLG and ASVL…TALG.

The protein belongs to the peptidase C56 family. As to quaternary structure, homotrimer. Expressed in roots and cauline leaves.

Its function is as follows. May be involved in oxidative stress response. This is DJ-1 protein homolog E (DJ1E) from Arabidopsis thaliana (Mouse-ear cress).